A 327-amino-acid chain; its full sequence is Lipoyl synthase (327 aa).

[4Fe-4S] cluster is bound by residues cysteine 72, cysteine 77, cysteine 83, cysteine 98, cysteine 102, cysteine 105, and serine 313. Residues 83-302 form the Radical SAM core domain; the sequence is CWSHGTATIM…RKVGLEKGFL (220 aa).

Belongs to the radical SAM superfamily. Lipoyl synthase family. The cofactor is [4Fe-4S] cluster.

The protein localises to the cytoplasm. The enzyme catalyses [[Fe-S] cluster scaffold protein carrying a second [4Fe-4S](2+) cluster] + N(6)-octanoyl-L-lysyl-[protein] + 2 oxidized [2Fe-2S]-[ferredoxin] + 2 S-adenosyl-L-methionine + 4 H(+) = [[Fe-S] cluster scaffold protein] + N(6)-[(R)-dihydrolipoyl]-L-lysyl-[protein] + 4 Fe(3+) + 2 hydrogen sulfide + 2 5'-deoxyadenosine + 2 L-methionine + 2 reduced [2Fe-2S]-[ferredoxin]. Its pathway is protein modification; protein lipoylation via endogenous pathway; protein N(6)-(lipoyl)lysine from octanoyl-[acyl-carrier-protein]: step 2/2. Functionally, catalyzes the radical-mediated insertion of two sulfur atoms into the C-6 and C-8 positions of the octanoyl moiety bound to the lipoyl domains of lipoate-dependent enzymes, thereby converting the octanoylated domains into lipoylated derivatives. This Francisella tularensis subsp. novicida (strain U112) protein is Lipoyl synthase.